The following is a 242-amino-acid chain: Orotidine 5'-phosphate decarboxylase (242 aa).

Residues D22, K44, 71–80 (DLKYHDIPNT), T130, R190, Q199, G219, and R220 each bind substrate. K73 functions as the Proton donor in the catalytic mechanism.

Belongs to the OMP decarboxylase family. Type 1 subfamily. In terms of assembly, homodimer.

It catalyses the reaction orotidine 5'-phosphate + H(+) = UMP + CO2. Its pathway is pyrimidine metabolism; UMP biosynthesis via de novo pathway; UMP from orotate: step 2/2. In terms of biological role, catalyzes the decarboxylation of orotidine 5'-monophosphate (OMP) to uridine 5'-monophosphate (UMP). The polypeptide is Orotidine 5'-phosphate decarboxylase (Laribacter hongkongensis (strain HLHK9)).